The sequence spans 518 residues: D-aminopeptidase (518 aa).

Residue Ser-62 is the Nucleophile of the active site. Catalysis depends on Lys-65, which acts as the Proton donor/acceptor. The tract at residues 477–487 (QRSMDAPSPGE) is important for specificity. Asp-481 lines the substrate pocket.

Belongs to the peptidase S12 family. As to quaternary structure, homodimer.

The catalysed reaction is Release of an N-terminal D-amino acid from a peptide, Xaa-|-Yaa-, in which Xaa is preferably D-Ala, D-Ser or D-Thr. D-amino acid amides and methyl esters also are hydrolyzed, as is glycine amide.. With respect to regulation, inhibited by beta-lactam compounds such as 6-aminopenicillic acid, 7-aminocephalosporanic acid, benzylpenicillin and ampicillin. Inhibited by p-chloromercuribenzoate. Its function is as follows. Hydrolyzes N-terminal residues in D-amino acid-containing peptides. This is D-aminopeptidase from Brucella abortus (strain S19).